We begin with the raw amino-acid sequence, 292 residues long: MMKVDQDYSCSIPPGFRFHPTDEELVGYYLKKKIASQRIDLDVIREIDLYKIEPWDLQERCRIGYEEQTEWYFFSHRDKKYPTGTRTNRATVAGFWKATGRDKAVYLNSKLIGMRKTLVFYRGRAPNGQKSDWIIHEYYSLESHQNSPPQEEGWVVCRAFKKRTTIPTKRRQLWDPNCLFYDDATLLEPLDKRARHNPDFTATPFKQELLSEASHVQDGDFGSMYLQCIDDDQFSQLPQLESPSLPSEITPHSTTFSENSSRKDDMSSEKRITDWRYLDKFVASQFLMSGED.

One can recognise an NAC domain in the interval 12 to 162 (IPPGFRFHPT…GWVVCRAFKK (151 aa)). A DNA-binding region spans residues 112–168 (IGMRKTLVFYRGRAPNGQKSDWIIHEYYSLESHQNSPPQEEGWVVCRAFKKRTTIPT). The span at 237–259 (LPQLESPSLPSEITPHSTTFSEN) shows a compositional bias: polar residues. Positions 237–269 (LPQLESPSLPSEITPHSTTFSENSSRKDDMSSE) are disordered. Residues 260–269 (SSRKDDMSSE) show a composition bias toward basic and acidic residues.

It belongs to the plant vascular related NAC-domain protein family. As to quaternary structure, interacts with NAC030/VND7. Detected in root protoxylem and metaxylem poles and in vessels of protoxylems, outermost metaxylems, inner metaxylems, shoots and hypocotyls. Expressed in roots, hypocotyls, cotyledons and leaves. Present in developing xylems. Present in root developing xylems. Specifically expressed in vessels but not in interfascicular fibers in stems.

It is found in the nucleus. Transcription activator that binds to the secondary wall NAC binding element (SNBE), 5'-(T/A)NN(C/T)(T/C/G)TNNNNNNNA(A/C)GN(A/C/T)(A/T)-3', in the promoter of target genes. Involved in xylem formation by promoting the expression of secondary wall-associated transcription factors and of genes involved in secondary wall biosynthesis and programmed cell death, genes driven by the secondary wall NAC binding element (SNBE). Triggers thickening of secondary walls. The polypeptide is NAC domain-containing protein 105 (Arabidopsis thaliana (Mouse-ear cress)).